We begin with the raw amino-acid sequence, 657 residues long: 2',3'-cyclic-nucleotide 2'-phosphodiesterase/3'-nucleotidase (657 aa).

Positions 1-26 (MMNRRHFIQISATSILALSANRFAMA) are cleaved as a signal peptide. A divalent metal cation-binding residues include Asp-41, His-43, Asp-86, Asn-126, His-235, His-267, and His-269. Substrate-binding positions include Tyr-450 and 554-559 (YRAYGN).

It belongs to the 5'-nucleotidase family. A divalent metal cation is required as a cofactor.

It is found in the periplasm. It catalyses the reaction a nucleoside 2',3'-cyclic phosphate + H2O = a nucleoside 3'-phosphate + H(+). It carries out the reaction a ribonucleoside 3'-phosphate + H2O = a ribonucleoside + phosphate. This bifunctional enzyme catalyzes two consecutive reactions during ribonucleic acid degradation. Converts a 2',3'-cyclic nucleotide to a 3'-nucleotide and then the 3'-nucleotide to the corresponding nucleoside and phosphate. This chain is 2',3'-cyclic-nucleotide 2'-phosphodiesterase/3'-nucleotidase (cpdB), found in Haemophilus influenzae (strain ATCC 51907 / DSM 11121 / KW20 / Rd).